The primary structure comprises 586 residues: MPKPINVRVTTMDAELEFAIQPNTTGKQLFDQVVKTIGLREVWYFGLQYVDNKGFPTWLKLDKKVSAQEVRKENPVQFKFRAKFYPEDVADELIQDITQKLFFLQVKEGILSDEIYCPPETAVLLGSYAVQAKFGDYNKEMHKSGYLSSERLIPQRVMDQHKLSRDQWEDRIQVWHAEHRGMLKDSAMLEYLKIAQDLEMYGINYFEIKNKKGTDLWLGVDALGLNIYEKDDKLTPKIGFPWSEIRNISFNDKKFVIKPIDKKAPDFVFYAPRLRINKRILQLCMGNHELYMRRRKPDTIEVQQMKAQAREEKHQKQLERQQLETEKKRRETVEREKEQMLREKEELMLRLQDFEQKTKRAEKELSEQIEKALQLEEERRRAQEEAERLEADRMAALRAKEELERQAQDQIKSQEQLAAELAEYTAKIALLEEARRRKEDEVEEWQHRAKEAQDDLVKTKEELHLVMTAPPPPPPPVYEPVNYHVQEGLQDEGAEPMGYSAELSSEGILDDRNEEKRITEAEKNERVQRQLLTLSNELSQARDENKRTHNDIIHNENMRQGRDKYKTLRQIRQGNTKQRIDEFEAM.

The FERM domain occupies 2–295 (PKPINVRVTT…GNHELYMRRR (294 aa)). Lys-60 carries the N6-acetyllysine modification. A [IL]-x-C-x-x-[DE] motif motif is present at residues 115 to 120 (IYCPPE). Residue Tyr-146 is modified to Phosphotyrosine; by PDGFR. The interval 244–586 (EIRNISFNDK…KQRIDEFEAM (343 aa)) is interaction with SCYL3. The stretch at 302-462 (VQQMKAQARE…QDDLVKTKEE (161 aa)) forms a coiled coil. The interval 306 to 338 (KAQAREEKHQKQLERQQLETEKKRRETVEREKE) is disordered. The span at 308–338 (QAREEKHQKQLERQQLETEKKRRETVEREKE) shows a compositional bias: basic and acidic residues. Ser-366 carries the post-translational modification Phosphoserine. At Tyr-478 the chain carries Phosphotyrosine. Ser-535 bears the Phosphoserine mark. Residue Thr-567 is modified to Phosphothreonine; by ROCK2 and PKC/PRKCI.

In terms of assembly, interacts with PODXL and NHERF2. Found in a complex with EZR, PODXL and NHERF2. Interacts with PALS1. Interacts with MCC, PLEKHG6, SCYL3/PACE1, NHERF1 and TMEM8B. Interacts (when phosphorylated) with FES/FPS. Interacts with dimeric S100P, the interaction may be activating through unmasking of F-actin binding sites. Identified in complexes that contain VIM, EZR, AHNAK, BFSP1, BFSP2, ANK2, PLEC, PRX and spectrin. Detected in a complex composed of at least EZR, AHNAK, PPL and PRX. Interacts with PDPN (via cytoplasmic domain); activates RHOA and promotes epithelial-mesenchymal transition. Interacts with SPN/CD43 cytoplasmic tail, CD44 and ICAM2. Interacts with SLC9A3; interaction targets SLC9A3 to the apical membrane. Interacts with SLC9A1; regulates interactions of SLC9A1 with cytoskeletal and promotes stress fiber formation. Interacts with CLIC5; may work together in a complex which also includes RDX and MYO6 to stabilize linkages between the plasma membrane and subjacent actin cytoskeleton at the base of stereocilia. In terms of processing, phosphorylated by tyrosine-protein kinases. Phosphorylation by ROCK2 suppresses the head-to-tail association of the N-terminal and C-terminal halves resulting in an opened conformation which is capable of actin and membrane-binding. Post-translationally, S-nitrosylation is induced by interferon-gamma and oxidatively-modified low-densitity lipoprotein (LDL(ox)) possibly implicating the iNOS-S100A8/9 transnitrosylase complex. Glomerular epithelium cell (podocyte). Expressed in cerebrum, cerebellum and hippocampus (at protein level). Expressed in the small intestine, lung, kidney and ovaries.

The protein resides in the apical cell membrane. It is found in the cell projection. Its subcellular location is the microvillus membrane. It localises to the ruffle membrane. The protein localises to the cytoplasm. The protein resides in the cell cortex. It is found in the cytoskeleton. Its subcellular location is the microvillus. Its activity is regulated as follows. A head-to-tail association, of the N-terminal and C-terminal halves results in a closed conformation (inactive form) which is incapable of actin or membrane-binding. Its function is as follows. Probably involved in connections of major cytoskeletal structures to the plasma membrane. In epithelial cells, required for the formation of microvilli and membrane ruffles on the apical pole. Along with PLEKHG6, required for normal macropinocytosis. The sequence is that of Ezrin (Ezr) from Rattus norvegicus (Rat).